The primary structure comprises 763 residues: MGTVPDPLRVTKASIVAASGKEESRGESQSVSPQPAQPDNNASGIGNVPAELSLQLSAAAQALMQACVSESSQQDMASPGVFSEGEPVSPKQKTPDDFLLHGSKESAAPGLNATAQKELISAPCLISVVQHTHHAIQRDAPNTSTCAVPEGSLVKSEANSNGENPEKPGCPARVTCCSSKNQEGLCDFPSPENSQGILQTPDIASPSADRPEGEGQKVINNITAVSSEPPVREGCSENKQPSATALNTTAERSENPPPSHLTSKGATCSSEARQALLPAQYPVSRFKEASTMTCQAESGAKEVSGRAWQDAEVQAVASVESRSVSTSPSILPAYLKENPAPELENGQEQLRVICHGKGSGNHLLELSNSMVDSQESRQCPSIVPQVHIQAATATPAAFKGGCKPANQPAEGLKSPLIHVTSSQNTETEEDLRLSASKEATSRQPEGTNPDFQKANAIGQISLPAGSQAEINQGLWNSGPREPEIVVKTAKDHKAESSCKPSNSGGGANKDYPPESLDPTDKKGAKDKKPASPLIVKDHAPGATSTLDAKTLLLNPKSQVKEGEGPEVSPAPSPGRKSQQNTLEELRQPKTVMSLSLPSDGTGDSSPGSGKRTPSLSVKASPRRGSRVSEFLKELSVTAAAAQVGLTPGEKKKQLGADSKLHLKQSKRVRDVVWDDQGMTWEVYGASLDPESLGVAIQNHLQRQIREHEKIVKTQSGQTRRSISSDSSSSKKLKGRQHGVLQSMLQNFRRPNCCVRPAPSSVLD.

3 disordered regions span residues 1 to 48 (MGTV…IGNV), 65 to 111 (QACV…APGL), and 192 to 268 (ENSQ…GATC). Positions 27–44 (ESQSVSPQPAQPDNNASG) are enriched in polar residues. Positions 93-104 (KTPDDFLLHGSK) are enriched in basic and acidic residues. The span at 237–250 (ENKQPSATALNTTA) shows a compositional bias: polar residues. 2 positions are modified to phosphoserine: Ser323 and Ser359. Disordered regions lie at residues 420–452 (TSSQNTETEEDLRLSASKEATSRQPEGTNPDFQ), 471–624 (NQGL…PRRG), and 711–737 (VKTQSGQTRRSISSDSSSSKKLKGRQH). A compositionally biased stretch (polar residues) spans 437 to 450 (KEATSRQPEGTNPD). Basic and acidic residues-rich tracts occupy residues 480 to 496 (REPEIVVKTAKDHKAES) and 518 to 539 (PTDKKGAKDKKPASPLIVKDHA). A compositionally biased stretch (low complexity) spans 593–609 (SLSLPSDGTGDSSPGSG).

Functionally, may be involved in neurite outgrowth. This chain is G protein-regulated inducer of neurite outgrowth 3 (Gprin3), found in Mus musculus (Mouse).